Consider the following 176-residue polypeptide: NAD(P)H-quinone oxidoreductase subunit J (176 aa).

The protein belongs to the complex I 30 kDa subunit family. As to quaternary structure, NDH-1 can be composed of about 15 different subunits; different subcomplexes with different compositions have been identified which probably have different functions.

It localises to the cellular thylakoid membrane. It catalyses the reaction a plastoquinone + NADH + (n+1) H(+)(in) = a plastoquinol + NAD(+) + n H(+)(out). It carries out the reaction a plastoquinone + NADPH + (n+1) H(+)(in) = a plastoquinol + NADP(+) + n H(+)(out). Its function is as follows. NDH-1 shuttles electrons from an unknown electron donor, via FMN and iron-sulfur (Fe-S) centers, to quinones in the respiratory and/or the photosynthetic chain. The immediate electron acceptor for the enzyme in this species is believed to be plastoquinone. Couples the redox reaction to proton translocation, and thus conserves the redox energy in a proton gradient. Cyanobacterial NDH-1 also plays a role in inorganic carbon-concentration. The chain is NAD(P)H-quinone oxidoreductase subunit J from Prochlorococcus marinus subsp. pastoris (strain CCMP1986 / NIES-2087 / MED4).